The primary structure comprises 618 residues: Matrix metalloproteinase-24 (618 aa).

The first 41 residues, 1–41 (MPRSRGGRAAPGQASRWSGWRAPGRLLPLLPALCCLAAAAG), serve as a signal peptide directing secretion. The propeptide occupies 42–128 (AGKPAGADAP…HLSRRRRNKR (87 aa)). Topologically, residues 42-575 (AGKPAGADAP…IDDVPGSVNA (534 aa)) are extracellular. Positions 110-117 (PRCGVPDH) match the Cysteine switch motif. C112 and H255 together coordinate Zn(2+). E256 is a catalytic residue. Positions 259 and 265 each coordinate Zn(2+). Residues 296 to 352 (QKIYGPPAEPLEPTRPLPTLPVRRIHSPSERKHERHPRPPRPPLGDRPSTPGAKPNI) form a disordered region. The segment covering 302 to 314 (PAEPLEPTRPLPT) has biased composition (pro residues). Hemopexin repeat units follow at residues 350-398 (PNIC…WKGL), 399-444 (PARI…GSCL), 446-494 (REGI…KGIP), and 495-542 (QAPQ…WMGC). An intrachain disulfide couples C353 to C542. The chain crosses the membrane as a helical span at residues 576 to 596 (VAVVVPCTLSLCLLVLLYTIF). Residues 597-618 (QFKNKAGPQPVTYYKRPVQEWV) lie on the Cytoplasmic side of the membrane. The PDZ-binding signature appears at 616-618 (EWV).

Belongs to the peptidase M10A family. In terms of assembly, interacts with GRIP1 and GRIP2. Interacts (via PDZ-binding motif) with APBA3 (via PDZ domain). Zn(2+) serves as cofactor. Ca(2+) is required as a cofactor. Cleaved by a furin endopeptidase in the trans-Golgi network. As to expression, mainly expressed in neuronal cells of both central and peripheral nervous systems. Expressed by CGRP-containing peptidergic nociceptors in dorsal root ganglia. Expressed in adult neural stem cell and ependymocytes. Expressed at low level in testis.

The protein resides in the cell membrane. It localises to the golgi apparatus. It is found in the trans-Golgi network membrane. The protein localises to the secreted. Its subcellular location is the extracellular space. The protein resides in the extracellular matrix. Functionally, metalloprotease that mediates cleavage of N-cadherin (CDH2) and acts as a regulator of neuro-immune interactions and neural stem cell quiescence. Involved in cell-cell interactions between nociceptive neurites and mast cells, possibly by mediating cleavage of CDH2, thereby acting as a mediator of peripheral thermal nociception and inflammatory hyperalgesia. Key regulator of neural stem cells quiescence by mediating cleavage of CDH2, affecting CDH2-mediated anchorage of neural stem cells to ependymocytes in the adult subependymal zone, leading to modulate their quiescence. May play a role in axonal growth. Able to activate progelatinase A. May also be a proteoglycanase involved in degradation of proteoglycans, such as dermatan sulfate and chondroitin sulfate proteoglycans. Cleaves partially fibronectin, but not collagen type I, nor laminin. In Mus musculus (Mouse), this protein is Matrix metalloproteinase-24 (Mmp24).